Reading from the N-terminus, the 426-residue chain is Delta-aminolevulinic acid dehydratase, chloroplastic (426 aa).

Residues 1–45 (MASTVSFSPANVQMLQGRSCHGHAAFGGCSAVPRTGPRMRSVAVR) constitute a chloroplast transit peptide. The segment at 74–107 (GRFPAPPPLVRPKAPEGTPQIRPLDLTKRPRRNR) is disordered. Lys293 functions as the Schiff-base intermediate with substrate in the catalytic mechanism. 2 residues coordinate 5-aminolevulinate: Arg303 and Lys315. Mg(2+) is bound at residue Glu331. Residue Lys346 is the Schiff-base intermediate with substrate of the active site. 2 residues coordinate 5-aminolevulinate: Ser372 and Tyr411.

The protein belongs to the ALAD family. As to quaternary structure, homooctamer. The cofactor is Mg(2+).

It is found in the plastid. The protein localises to the chloroplast. It catalyses the reaction 2 5-aminolevulinate = porphobilinogen + 2 H2O + H(+). The protein operates within porphyrin-containing compound metabolism; protoporphyrin-IX biosynthesis; coproporphyrinogen-III from 5-aminolevulinate: step 1/4. Its function is as follows. Catalyzes an early step in the biosynthesis of tetrapyrroles. Binds two molecules of 5-aminolevulinate per subunit, each at a distinct site, and catalyzes their condensation to form porphobilinogen. This chain is Delta-aminolevulinic acid dehydratase, chloroplastic (HEMB), found in Oryza sativa subsp. japonica (Rice).